The sequence spans 549 residues: Dicarboxylate transporter 2.2, chloroplastic (549 aa).

A chloroplast-targeting transit peptide spans 1-54; the sequence is MESLALRSISLSASYLSLHRSSSKSFALLPPSISVHTSPTLRSLSISSPRFTLR. A disordered region spans residues 57-79; it reads ASSLPEEQNKPQPPPPSPPQPQG. Over residues 67 to 77 the composition is skewed to pro residues; the sequence is PQPPPPSPPQP. The next 12 helical transmembrane spans lie at 79 to 99, 115 to 135, 151 to 171, 220 to 240, 247 to 267, 294 to 314, 344 to 364, 365 to 385, 403 to 423, 436 to 456, 470 to 490, and 523 to 543; these read GAKL…RFLI, IFLF…AWAF, TAFA…FFFA, AGGV…SYPG, LGSF…AILL, WFKV…LIIY, NEWI…FGEA, IGIA…LLGV, WFAV…VAWM, LTWP…HYLF, FLAM…CLAF, and VGFV…SFWW.

This sequence belongs to the SLC13A/DASS transporter (TC 2.A.47) family. DIT1 subfamily. Expressed in roots, rosette and cauline leaves, stems, flowers and siliques.

It is found in the plastid. The protein localises to the chloroplast inner membrane. May be involved in the transport of dicarboxylate compounds. The sequence is that of Dicarboxylate transporter 2.2, chloroplastic (DIT2-2) from Arabidopsis thaliana (Mouse-ear cress).